The primary structure comprises 834 residues: Periplasmic nitrate reductase (834 aa).

Positions 1-32 (MTDMKIDRRQMLKLEAAAIAAAAAGMPSTSLA) form a signal peptide, tat-type signal. The region spanning 44 to 100 (LKWDKAACRFCGTGCSVMVATKDNRVVATHGDIKAEVNRGLNCVKGYFLSKIMYGHD) is the 4Fe-4S Mo/W bis-MGD-type domain. Cysteine 51, cysteine 54, cysteine 58, and cysteine 86 together coordinate [4Fe-4S] cluster. Mo-bis(molybdopterin guanine dinucleotide) contacts are provided by residues lysine 88, glutamine 155, asparagine 180, cysteine 184, 217 to 224 (WGSNMAEM), 248 to 252 (STFEH), 267 to 269 (QTD), methionine 378, glutamine 382, asparagine 488, 514 to 515 (SD), lysine 537, aspartate 564, and 724 to 733 (TGRVVEHWHS). Tryptophan 800 is a binding site for substrate. Residues asparagine 808 and lysine 825 each contribute to the Mo-bis(molybdopterin guanine dinucleotide) site.

The protein belongs to the prokaryotic molybdopterin-containing oxidoreductase family. NasA/NapA/NarB subfamily. In terms of assembly, component of the periplasmic nitrate reductase NapAB complex composed of NapA and NapB. It depends on [4Fe-4S] cluster as a cofactor. Requires Mo-bis(molybdopterin guanine dinucleotide) as cofactor. Predicted to be exported by the Tat system. The position of the signal peptide cleavage has not been experimentally proven.

The protein localises to the periplasm. The catalysed reaction is 2 Fe(II)-[cytochrome] + nitrate + 2 H(+) = 2 Fe(III)-[cytochrome] + nitrite + H2O. Functionally, catalytic subunit of the periplasmic nitrate reductase complex NapAB. Receives electrons from NapB and catalyzes the reduction of nitrate to nitrite. In Bradyrhizobium sp. (strain BTAi1 / ATCC BAA-1182), this protein is Periplasmic nitrate reductase.